A 156-amino-acid polypeptide reads, in one-letter code: ATP synthase subunit b (156 aa).

The chain crosses the membrane as a helical span at residues 12–32; that stretch reads VAFLIFVLFCMKFIWPPVIAA.

The protein belongs to the ATPase B chain family. F-type ATPases have 2 components, F(1) - the catalytic core - and F(0) - the membrane proton channel. F(1) has five subunits: alpha(3), beta(3), gamma(1), delta(1), epsilon(1). F(0) has three main subunits: a(1), b(2) and c(10-14). The alpha and beta chains form an alternating ring which encloses part of the gamma chain. F(1) is attached to F(0) by a central stalk formed by the gamma and epsilon chains, while a peripheral stalk is formed by the delta and b chains.

The protein resides in the cell inner membrane. F(1)F(0) ATP synthase produces ATP from ADP in the presence of a proton or sodium gradient. F-type ATPases consist of two structural domains, F(1) containing the extramembraneous catalytic core and F(0) containing the membrane proton channel, linked together by a central stalk and a peripheral stalk. During catalysis, ATP synthesis in the catalytic domain of F(1) is coupled via a rotary mechanism of the central stalk subunits to proton translocation. Functionally, component of the F(0) channel, it forms part of the peripheral stalk, linking F(1) to F(0). This Pseudomonas fluorescens (strain ATCC BAA-477 / NRRL B-23932 / Pf-5) protein is ATP synthase subunit b.